The following is a 351-amino-acid chain: Cytoplasmic dynein 2 light intermediate chain 1 (351 aa).

The interval 304–351 is disordered; sequence TLKDVKDPAKDPQYAESEVDEMRIQKDQELEQYKRSSSKSWKQIELDS. Residues 323–337 show a composition bias toward basic and acidic residues; it reads DEMRIQKDQELEQYK.

This sequence belongs to the dynein light intermediate chain family. As to quaternary structure, light intermediate chain of the cytoplasmic dynein complex 2, a multisubunit complex composed at least of eleven different proteins. The cytoplasmic dynein 2 complex consists of two catalytic heavy chains (HCs) and a number of non-catalytic subunits presented by intermediate chains (ICs), light intermediate chains (LICs) and light chains (LCs). Among them, a heavy chain (DYNC2H1), two intermediate chains (DYNC2I2 and DYNC2I1), a light intermediate chain (DYNC2LI1), and a light chain (DYNLT2B) are unique to the dynein-2 complex, but a subset of light chains are also shared by dynein-1 and dynein-2 complexes. Dynein-2 complex is built around two copies of cytoplasmic dynein 2 heavy chain 1 (DYNC2H1). The C-terminal region forms the motor domain, which converts the energy from ATP hydrolysis into movement. Its N-terminal region forms the tail, an extended structure that binds the other subunits and holds the two heavy chains in a homodimer. Interacts with DYNC2H1 (via N-terminus); this interaction stabilizes the dynein-2 complex structure.

Its subcellular location is the cytoplasm. It localises to the cell projection. The protein localises to the cilium. The protein resides in the cytoskeleton. It is found in the cilium basal body. Its subcellular location is the cilium axoneme. It localises to the microtubule organizing center. The protein localises to the centrosome. Its function is as follows. Acts as one of several non-catalytic accessory components of the cytoplasmic dynein 2 complex (dynein-2 complex), a motor protein complex that drives the movement of cargos along microtubules within cilia and flagella in concert with the intraflagellar transport (IFT) system, facilitating the assembly of these organelles. Involved in the regulation of ciliary length. The chain is Cytoplasmic dynein 2 light intermediate chain 1 (DYNC2LI1) from Bos taurus (Bovine).